The chain runs to 721 residues: Polyribonucleotide nucleotidyltransferase (721 aa).

Mg(2+) contacts are provided by Asp495 and Asp501. Residues 562–621 (PRLLSFRIDPELIGTVIGPGGRTIKGITERTNTKIDIEDGGIVTIASHDGAAAEEAQKII) form the KH domain. One can recognise an S1 motif domain in the interval 631 to 699 (GEIFSGVVTR…SRGRINLTLR (69 aa)). The tract at residues 701–721 (VGQNNGMSYPEPTPTPVAPLN) is disordered. The span at 711–721 (EPTPTPVAPLN) shows a compositional bias: pro residues.

The protein belongs to the polyribonucleotide nucleotidyltransferase family. Mg(2+) serves as cofactor.

It localises to the cytoplasm. It carries out the reaction RNA(n+1) + phosphate = RNA(n) + a ribonucleoside 5'-diphosphate. In terms of biological role, involved in mRNA degradation. Catalyzes the phosphorolysis of single-stranded polyribonucleotides processively in the 3'- to 5'-direction. This is Polyribonucleotide nucleotidyltransferase from Prochlorococcus marinus (strain MIT 9215).